The chain runs to 185 residues: Ribosome-recycling factor (185 aa).

It belongs to the RRF family.

The protein localises to the cytoplasm. Responsible for the release of ribosomes from messenger RNA at the termination of protein biosynthesis. May increase the efficiency of translation by recycling ribosomes from one round of translation to another. This chain is Ribosome-recycling factor, found in Neorickettsia sennetsu (strain ATCC VR-367 / Miyayama) (Ehrlichia sennetsu).